We begin with the raw amino-acid sequence, 441 residues long: Apolipoprotein N-acyltransferase (441 aa).

A run of 7 helical transmembrane segments spans residues 23-43 (IIFK…SIYL), 45-65 (FFEN…GLVL), 75-95 (YFWI…LSSI), 97-117 (FNLN…YGLL), 133-153 (GIFC…WGIF), 156-176 (YGFF…AYFI), and 178-198 (EGYI…FSGF). The CN hydrolase domain maps to 215-441 (INTNISQDQK…LSKEIFNDKK (227 aa)). Residue E256 is the Proton acceptor of the active site. The active site involves K310. C359 acts as the Nucleophile in catalysis.

Belongs to the CN hydrolase family. Apolipoprotein N-acyltransferase subfamily.

It is found in the cell inner membrane. It carries out the reaction N-terminal S-1,2-diacyl-sn-glyceryl-L-cysteinyl-[lipoprotein] + a glycerophospholipid = N-acyl-S-1,2-diacyl-sn-glyceryl-L-cysteinyl-[lipoprotein] + a 2-acyl-sn-glycero-3-phospholipid + H(+). It functions in the pathway protein modification; lipoprotein biosynthesis (N-acyl transfer). In terms of biological role, catalyzes the phospholipid dependent N-acylation of the N-terminal cysteine of apolipoprotein, the last step in lipoprotein maturation. In Campylobacter jejuni subsp. jejuni serotype O:2 (strain ATCC 700819 / NCTC 11168), this protein is Apolipoprotein N-acyltransferase.